Here is a 269-residue protein sequence, read N- to C-terminus: Chymotrypsin-like elastase family member 3B (269 aa).

The signal sequence occupies residues 1-16 (MLRLLSSLLLVALASG). A propeptide spans 17-27 (CGQPSHNPSSR) (activation peptide). The region spanning 28 to 267 (VVNGEEAVPH…FIDWIEETIA (240 aa)) is the Peptidase S1 domain. Cys-57 and Cys-73 are joined by a disulfide. Catalysis depends on charge relay system residues His-72 and Asp-122. Disulfide bonds link Cys-156–Cys-222, Cys-187–Cys-203, and Cys-212–Cys-243. Ser-216 functions as the Charge relay system in the catalytic mechanism.

The protein belongs to the peptidase S1 family. Elastase subfamily.

It carries out the reaction Preferential cleavage: Ala-|-Xaa. Does not hydrolyze elastin.. Efficient protease with alanine specificity but only little elastolytic activity. This is Chymotrypsin-like elastase family member 3B (Cela3b) from Mus musculus (Mouse).